A 257-amino-acid polypeptide reads, in one-letter code: Phosphonates import ATP-binding protein PhnC (257 aa).

Residues 2–246 form the ABC transporter domain; it reads IEFRNVSKVY…KFAEIYGDVA (245 aa). 35 to 42 is an ATP binding site; it reads GLSGAGKS.

The protein belongs to the ABC transporter superfamily. Phosphonates importer (TC 3.A.1.9.1) family. In terms of assembly, the complex is composed of two ATP-binding proteins (PhnC), two transmembrane proteins (PhnE) and a solute-binding protein (PhnD).

The protein localises to the cell membrane. The catalysed reaction is phosphonate(out) + ATP + H2O = phosphonate(in) + ADP + phosphate + H(+). Its function is as follows. Part of the ABC transporter complex PhnCDE involved in phosphonates import. Responsible for energy coupling to the transport system. The sequence is that of Phosphonates import ATP-binding protein PhnC from Bacillus cereus (strain ATCC 10987 / NRS 248).